The primary structure comprises 492 residues: Cyclic di-GMP phosphodiesterase VC_1295 (492 aa).

The next 6 membrane-spanning stretches (helical) occupy residues 14–34, 49–69, 80–100, 111–131, 160–180, and 205–225; these read IYHA…FALY, EIAT…HTLL, FIQL…LYYN, LKVL…LQLS, LIGL…MVAI, and EFAF…VLWS. An HAMP domain is found at 226–278; sequence RMMKEILDHQERSLQAVTQGNLQVRLPVYSNDELGNVAMLTNQMLDSLEATQN. The region spanning 280 to 490 is the HD-GYP domain; it reads VKTTRDVAIV…FVAIAAHFKD (211 aa).

The protein localises to the cell inner membrane. The catalysed reaction is 3',3'-c-di-GMP + 2 H2O = 2 GMP + 2 H(+). Phosphodiesterase (PDE) that catalyzes the hydrolysis of cyclic diguanylate (c-di-GMP) to GMP in vitro. Increases motility and decreases biofilm formation in vivo. This is Cyclic di-GMP phosphodiesterase VC_1295 from Vibrio cholerae serotype O1 (strain ATCC 39315 / El Tor Inaba N16961).